The following is a 235-amino-acid chain: 7-cyano-7-deazaguanine synthase (235 aa).

8–18 provides a ligand contact to ATP; it reads FSGGQDSTTCL. Positions 187, 196, 199, and 202 each coordinate Zn(2+).

Belongs to the QueC family. Zn(2+) serves as cofactor.

It catalyses the reaction 7-carboxy-7-deazaguanine + NH4(+) + ATP = 7-cyano-7-deazaguanine + ADP + phosphate + H2O + H(+). It participates in purine metabolism; 7-cyano-7-deazaguanine biosynthesis. Its function is as follows. Catalyzes the ATP-dependent conversion of 7-carboxy-7-deazaguanine (CDG) to 7-cyano-7-deazaguanine (preQ(0)). In Aeromonas hydrophila subsp. hydrophila (strain ATCC 7966 / DSM 30187 / BCRC 13018 / CCUG 14551 / JCM 1027 / KCTC 2358 / NCIMB 9240 / NCTC 8049), this protein is 7-cyano-7-deazaguanine synthase.